The sequence spans 640 residues: Envelope glycoprotein (640 aa).

An N-terminal signal peptide occupies residues 1 to 32 (MEGPAFSKPLKDKINPWGPLIILGILIRAGVS). At 33–582 (VQHDSPHQVF…FNKSPWFTTL (550 aa)) the chain is on the extracellular side. 2 N-linked (GlcNAc...) asparagine; by host glycosylation sites follow: N43 and N58. Disulfide bonds link C109-C126 and C118-C131. N-linked (GlcNAc...) asparagine; by host glycosylation is present at N297. Disulfide bonds link C307–C310, C307–C535, C337–C391, C356–C368, C398–C411, and C527–C534. Residues 307–310 (CWLC) carry the CXXC motif. N-linked (GlcNAc...) asparagine; by host glycosylation is found at N329 and N336. N-linked (GlcNAc...) asparagine; by host glycosylation occurs at N369. Residues 444–464 (VSLTLALLLGGLTMGGIAAGV) form a fusion peptide region. The stretch at 473–509 (ATQQFQQLQAAMHDDLKEVEKSITNLEKSLTSLSEVV) forms a coiled coil. Positions 510–526 (LQNRRGLDLLFLKEGGL) are immunosuppression. Positions 527-535 (CAALKEECC) match the CX6CC motif. A helical membrane pass occupies residues 583–603 (ISTIMGPLIILLLILLFGPWI). The Cytoplasmic segment spans residues 604-640 (LNRLVQFIKDRISVVQALVLTQQYHQLKTIGDCKSRE). Positions 627–630 (YHQL) match the YXXL motif; contains endocytosis signal motif.

In terms of assembly, the mature envelope protein (Env) consists of a trimer of SU-TM heterodimers attached by a labile interchain disulfide bond. Specific enzymatic cleavages in vivo yield mature proteins. Envelope glycoproteins are synthesized as an inactive precursor that is N-glycosylated and processed likely by host cell furin or by a furin-like protease in the Golgi to yield the mature SU and TM proteins. The cleavage site between SU and TM requires the minimal sequence [KR]-X-[KR]-R. The R-peptide is released from the C-terminus of the cytoplasmic tail of the TM protein upon particle formation as a result of proteolytic cleavage by the viral protease. Cleavage of this peptide is required for TM to become fusogenic. Post-translationally, the CXXC motif is highly conserved across a broad range of retroviral envelope proteins. It is thought to participate in the formation of a labile disulfide bond possibly with the CX6CC motif present in the transmembrane protein. Isomerization of the intersubunit disulfide bond to an SU intrachain disulfide bond is thought to occur upon receptor recognition in order to allow membrane fusion. In terms of processing, the R-peptide is palmitoylated.

It is found in the virion membrane. The protein resides in the host cell membrane. In terms of biological role, the surface protein (SU) attaches the virus to the host cell by binding to its receptor. This interaction triggers the refolding of the transmembrane protein (TM) and is thought to activate its fusogenic potential by unmasking its fusion peptide. Fusion occurs at the host cell plasma membrane. The transmembrane protein (TM) acts as a class I viral fusion protein. Under the current model, the protein has at least 3 conformational states: pre-fusion native state, pre-hairpin intermediate state, and post-fusion hairpin state. During viral and target cell membrane fusion, the coiled coil regions (heptad repeats) assume a trimer-of-hairpins structure, positioning the fusion peptide in close proximity to the C-terminal region of the ectodomain. The formation of this structure appears to drive apposition and subsequent fusion of viral and target cell membranes. Membranes fusion leads to delivery of the nucleocapsid into the cytoplasm. The sequence is that of Envelope glycoprotein (env) from Mus musculus (Mouse).